The chain runs to 188 residues: Elongation factor P (188 aa).

It belongs to the elongation factor P family.

The protein resides in the cytoplasm. It functions in the pathway protein biosynthesis; polypeptide chain elongation. In terms of biological role, involved in peptide bond synthesis. Stimulates efficient translation and peptide-bond synthesis on native or reconstituted 70S ribosomes in vitro. Probably functions indirectly by altering the affinity of the ribosome for aminoacyl-tRNA, thus increasing their reactivity as acceptors for peptidyl transferase. This chain is Elongation factor P, found in Gluconobacter oxydans (strain 621H) (Gluconobacter suboxydans).